The sequence spans 199 residues: Holliday junction branch migration complex subunit RuvA (199 aa).

A domain I region spans residues 1-63; the sequence is MYEYLTGLVT…EDNISLFGFT (63 aa). Residues 64–142 are domain II; that stretch reads DQNEKNLFMQ…NESSSSLFAT (79 aa). The flexible linker stretch occupies residues 143–149; that stretch reads TQLTVDA. The interval 150–199 is domain III; that stretch reads TVNRELKDALEALAALGYKERDIKKVQKALMKEEQMATDEYLRQALRLLN.

Belongs to the RuvA family. Homotetramer. Forms an RuvA(8)-RuvB(12)-Holliday junction (HJ) complex. HJ DNA is sandwiched between 2 RuvA tetramers; dsDNA enters through RuvA and exits via RuvB. An RuvB hexamer assembles on each DNA strand where it exits the tetramer. Each RuvB hexamer is contacted by two RuvA subunits (via domain III) on 2 adjacent RuvB subunits; this complex drives branch migration. In the full resolvosome a probable DNA-RuvA(4)-RuvB(12)-RuvC(2) complex forms which resolves the HJ.

It localises to the cytoplasm. Functionally, the RuvA-RuvB-RuvC complex processes Holliday junction (HJ) DNA during genetic recombination and DNA repair, while the RuvA-RuvB complex plays an important role in the rescue of blocked DNA replication forks via replication fork reversal (RFR). RuvA specifically binds to HJ cruciform DNA, conferring on it an open structure. The RuvB hexamer acts as an ATP-dependent pump, pulling dsDNA into and through the RuvAB complex. HJ branch migration allows RuvC to scan DNA until it finds its consensus sequence, where it cleaves and resolves the cruciform DNA. In Limosilactobacillus reuteri subsp. reuteri (strain JCM 1112) (Lactobacillus reuteri), this protein is Holliday junction branch migration complex subunit RuvA.